Reading from the N-terminus, the 211-residue chain is Metalloproteinase inhibitor 3 (211 aa).

The N-terminal stretch at 1-23 (MTPWLGLIVLLGSWSLGDWGAEA) is a signal peptide. Residue Cys-24 participates in Zn(2+) binding. Involved in metalloproteinase-binding regions lie at residues 24–27 (CTCS) and 88–89 (ES). Cystine bridges form between Cys-24/Cys-91, Cys-26/Cys-118, Cys-36/Cys-143, Cys-145/Cys-192, Cys-150/Cys-155, and Cys-163/Cys-184. Residues 24–143 (CTCSPSHPQD…GLNYRYHLGC (120 aa)) enclose the NTR domain. The segment at 105-188 (TGRVYDGKMY…SKHYACIRQK (84 aa)) is mediates interaction with EFEMP1. A glycan (N-linked (GlcNAc...) asparagine) is linked at Asn-207.

This sequence belongs to the protease inhibitor I35 (TIMP) family. In terms of assembly, interacts with EFEMP1. Interacts with KDR.

It is found in the secreted. It localises to the extracellular space. Its subcellular location is the extracellular matrix. Functionally, mediates a variety of processes including matrix regulation and turnover, inflammation, and angiogenesis, through reversible inhibition of zinc protease superfamily enzymes, primarily matrix metalloproteinases (MMPs). Regulates extracellular matrix (ECM) remodeling through inhibition of matrix metalloproteinases (MMP) including MMP-1, MMP-2, MMP-3, MMP-7, MMP-9, MMP-13, MMP-14 and MMP-15. Additionally, modulates the processing of amyloid precursor protein (APP) and apolipoprotein E receptor ApoER2 by inhibiting two alpha-secretases ADAM10 and ADAM17. Functions as a tumor suppressor and a potent inhibitor of angiogenesis. Exerts its anti-angiogenic effect by directly interacting with vascular endothelial growth factor (VEGF) receptor-2/KDR, preventing its binding to the VEGFA ligand. Selectively induces apoptosis in angiogenic endothelial cells through a caspase-independent cell death pathway. Mechanistically, inhibits matrix-induced focal adhesion kinase PTK2 tyrosine phosphorylation and association with paxillin/PXN and disrupts the incorporation of ITGB3, PTK2 and PXN into focal adhesion contacts on the matrix. This is Metalloproteinase inhibitor 3 (TIMP3) from Macaca mulatta (Rhesus macaque).